The primary structure comprises 64 residues: Large ribosomal subunit protein bL35 (64 aa).

The segment covering 1 to 14 (MKQKTHKGTAKRIK) has biased composition (basic residues). Residues 1 to 48 (MKQKTHKGTAKRIKVTGSGKLRREQANRRHLLEGKPSKRTRRLKGTED) are disordered. Residues 21 to 36 (LRREQANRRHLLEGKP) are compositionally biased toward basic and acidic residues.

Belongs to the bacterial ribosomal protein bL35 family.

The chain is Large ribosomal subunit protein bL35 from Corynebacterium aurimucosum (strain ATCC 700975 / DSM 44827 / CIP 107346 / CN-1) (Corynebacterium nigricans).